The following is a 168-amino-acid chain: Phosphopantetheine adenylyltransferase (168 aa).

Substrate is bound at residue Thr-17. Residues 17–18 (TF) and His-25 contribute to the ATP site. The substrate site is built by Lys-49, Leu-81, and Arg-95. Residues 96–98 (GLR), Glu-106, and 131–137 (LMYISST) contribute to the ATP site.

Belongs to the bacterial CoaD family. In terms of assembly, homohexamer. Mg(2+) is required as a cofactor.

It is found in the cytoplasm. The enzyme catalyses (R)-4'-phosphopantetheine + ATP + H(+) = 3'-dephospho-CoA + diphosphate. It participates in cofactor biosynthesis; coenzyme A biosynthesis; CoA from (R)-pantothenate: step 4/5. Its function is as follows. Reversibly transfers an adenylyl group from ATP to 4'-phosphopantetheine, yielding dephospho-CoA (dPCoA) and pyrophosphate. The chain is Phosphopantetheine adenylyltransferase from Legionella pneumophila (strain Paris).